The following is a 432-amino-acid chain: Enolase (432 aa).

A (2R)-2-phosphoglycerate-binding site is contributed by Q163. The Proton donor role is filled by E205. D242, E285, and D312 together coordinate Mg(2+). The (2R)-2-phosphoglycerate site is built by K337, R366, S367, and K388. The active-site Proton acceptor is the K337.

Belongs to the enolase family. Mg(2+) is required as a cofactor.

Its subcellular location is the cytoplasm. It is found in the secreted. The protein localises to the cell surface. The enzyme catalyses (2R)-2-phosphoglycerate = phosphoenolpyruvate + H2O. Its pathway is carbohydrate degradation; glycolysis; pyruvate from D-glyceraldehyde 3-phosphate: step 4/5. Functionally, catalyzes the reversible conversion of 2-phosphoglycerate (2-PG) into phosphoenolpyruvate (PEP). It is essential for the degradation of carbohydrates via glycolysis. In Bifidobacterium longum (strain DJO10A), this protein is Enolase.